We begin with the raw amino-acid sequence, 270 residues long: uncharacterized protein (270 aa).

To T.pallidum TP_0127, TP_0315 and TP_0618.

This is an uncharacterized protein from Treponema pallidum (strain Nichols).